The primary structure comprises 1308 residues: Cadherin-related family member 2 (1308 aa).

A signal peptide spans 1 to 20 (MAWLWLLCALLPAFMVSVTA). The Extracellular portion of the chain corresponds to 21-1152 (NSPPSFGVNM…EPDQQKLLTS (1132 aa)). 9 consecutive Cadherin domains span residues 33–124 (VTLP…IPVF), 125–241 (LNTE…DPRF), 242–353 (IREF…KPEF), 368–480 (AQVN…RPVF), 481–586 (SQSL…PPVV), 586–695 (VRGS…LPVF), 695–807 (FNQS…PPTL), 809–927 (AASL…APYF), and 929–1051 (PNNQ…RLQF). A helical membrane pass occupies residues 1153–1173 (VIIGLVVSLVLVLVILITALV). Residues 1174-1308 (CLRKSYHRKL…TNPGLDTTDL (135 aa)) lie on the Cytoplasmic side of the membrane. The mediates interaction with USH1C and MYO7B and is required for proper localization to microvilli tips and function in microvilli organization stretch occupies residues 1178–1308 (SYHRKLRAMK…TNPGLDTTDL (131 aa)). Ser-1245 is modified (phosphoserine). The disordered stretch occupies residues 1251–1308 (VDLDMDSKEFKRKDLPGDPPEPDPEPLTAVLSGRSAGASEQQKKNLSFTNPGLDTTDL). Over residues 1255 to 1266 (MDSKEFKRKDLP) the composition is skewed to basic and acidic residues. A compositionally biased stretch (polar residues) spans 1288–1308 (ASEQQKKNLSFTNPGLDTTDL). Phosphoserine is present on Ser-1297.

As to quaternary structure, part of the IMAC/intermicrovillar adhesion complex/intermicrovillar tip-link complex composed of ANKS4B, MYO7B, USH1C, CDHR2 and CDHR5. Interacts with MAST2. Interacts (via cytoplasmic domain) with USH1C and MYO7B; required for proper localization of CDHR2 to microvilli tips and its function in brush border differentiation.

It is found in the apical cell membrane. Its subcellular location is the cell projection. The protein localises to the microvillus membrane. It localises to the cell junction. Its function is as follows. Intermicrovillar adhesion molecule that forms, via its extracellular domain, calcium-dependent heterophilic complexes with CDHR5 on adjacent microvilli. Thereby, controls the packing of microvilli at the apical membrane of epithelial cells. Through its cytoplasmic domain, interacts with microvillus cytoplasmic proteins to form the intermicrovillar adhesion complex/IMAC. This complex plays a central role in microvilli and epithelial brush border differentiation. May also play a role in cell-cell adhesion and contact inhibition in epithelial cells. This is Cadherin-related family member 2 from Mus musculus (Mouse).